Consider the following 221-residue polypeptide: PKHD-type hydroxylase P9303_20491 (221 aa).

The region spanning histidine 80 to serine 174 is the Fe2OG dioxygenase domain. Positions 98, 100, and 155 each coordinate Fe cation. Position 165 (arginine 165) interacts with 2-oxoglutarate.

Requires Fe(2+) as cofactor. The cofactor is L-ascorbate.

In Prochlorococcus marinus (strain MIT 9303), this protein is PKHD-type hydroxylase P9303_20491.